A 175-amino-acid polypeptide reads, in one-letter code: Pre-mRNA-splicing factor SNT309 (175 aa).

In terms of assembly, belongs to the NTC complex (or PRP19-associated complex), composed of at least CEF1, CLF1, ISY1, NTC20, SNT309, SYF1, SYF2, and PRP19. The NTC complex associates with the spliceosome after the release of the U1 and U4 snRNAs and forms the CWC spliceosome subcomplex (or CEF1-associated complex) reminiscent of a late-stage spliceosome composed also of the U2, U5 and U6 snRNAs and at least BUD13, BUD31, BRR2, CDC40, CUS1, CWC2, CWC15, CWC21, CWC22, CWC23, CWC24, CWC25, CWC27, ECM2, HSH155, IST3, LEA1, MSL1, PRP8, PRP9, PRP11, PRP21, PRP22, PRP45, PRP46, SLU7, SMB1, SMD1, SMD2, SMD3, SMX2, SMX3, SNU114, SPP2, RSE1 and YJU2. Interacts with PRP19.

It is found in the nucleus. In terms of biological role, involved in pre-mRNA splicing by stabilizing the NTC (or PRP19-associated complex). As a component of the NTC complex, associates to the spliceosome to mediate conformational rearrangement or to stabilize the structure of the spliceosome after U4 snRNA dissociation, which leads to spliceosome maturation. This chain is Pre-mRNA-splicing factor SNT309 (SNT309), found in Saccharomyces cerevisiae (strain ATCC 204508 / S288c) (Baker's yeast).